Here is a 206-residue protein sequence, read N- to C-terminus: Putative precorrin-2 dehydrogenase (206 aa).

NAD(+) contacts are provided by residues 20 to 21 (SV) and 41 to 46 (KEFDEE).

Belongs to the precorrin-2 dehydrogenase / sirohydrochlorin ferrochelatase family. As to quaternary structure, homodimer.

It carries out the reaction precorrin-2 + NAD(+) = sirohydrochlorin + NADH + 2 H(+). It participates in porphyrin-containing compound metabolism; siroheme biosynthesis; sirohydrochlorin from precorrin-2: step 1/1. In terms of biological role, involved in the archaeal biosynthesis of heme. Catalyzes the oxiation of precorrin-2 into sirohydroclorin. This chain is Putative precorrin-2 dehydrogenase, found in Methanocaldococcus jannaschii (strain ATCC 43067 / DSM 2661 / JAL-1 / JCM 10045 / NBRC 100440) (Methanococcus jannaschii).